We begin with the raw amino-acid sequence, 121 residues long: RING-box protein HRT1 (121 aa).

Positions 1-31 (MSNEVDRMDVDEDESQNIAQSSNQSAPVETK) are disordered. Phosphoserine is present on Ser-15. Residues 16-26 (QNIAQSSNQSA) show a composition bias toward low complexity. Cys-55, Cys-58, Cys-66, Cys-69, Cys-81, Cys-88, His-90, His-93, His-95, Cys-107, and Asp-110 together coordinate Zn(2+). Residues 55 to 111 (CAICRNHIMEPCIECQPKAMTDTDNECVAAWGVCNHAFHLHCINKWIKTRDACPLDN) form an RING-type zinc finger.

The protein belongs to the RING-box family. As to quaternary structure, component of multiple cullin-RING ligases (CRLs) composed of 4 subunits: the RING protein HRT1, a cullin, a linker protein, and one of many alternative substrate receptors. Component of SCF E3 ubiquitin ligase complexes containing the cullin CDC53, the linker protein SKP1/CBF3D, and substrate receptors containing F-box motifs like DAS1 or GRR1. Component of RTT101(MMS1) E3 ubiquitin ligase complexes containing the cullin RTT101, the linker protein MMS1, and substrate receptors belonging to a protein family described as DCAF (DDB1- and CUL4-associated factor) like MMS22. Component of CRL3 E3 ubiquitin ligase complexes containing the cullin CUL3, the linker protein ELC1, and substrate receptors containing SOCS-box motifs like ELA1. Interacts with CDC53, CUL3, RTT101, CDC4 and CDC34/UBC3.

The protein localises to the cytoplasm. It localises to the nucleus. Its pathway is protein modification; protein ubiquitination. In terms of biological role, core component of multiple cullin-RING-based E3 ubiquitin-protein ligase complexes (CRLs), which mediate the ubiquitination of target proteins. Recruits the E2 ubiquitin-conjugating enzyme CDC34/UBC3 to the complex and brings it into close proximity to the substrate. Also stimulates CDC34/UBC3 autoubiquitination and promotes the neddylation of CDC53 and RTT101. Component of the SCF(CDC4) ubiquitin ligase required for ubiquitination of the cyclin-dependent kinase inhibitor SIC1 and for the G1-to-S phase transition. Component of the RTT101(MMS1-MMS22) ubiquitin ligase that promotes fork progression through damaged DNA or natural pause sites. Component of the CRL3(ELA1) ubiquitin ligase required for ubiquitination of RPB1, the largest subunit of RNA polymerase II (Pol II), which targets Pol II for proteasomal degradation in DNA-damaged cells. This chain is RING-box protein HRT1 (HRT1), found in Saccharomyces cerevisiae (strain ATCC 204508 / S288c) (Baker's yeast).